A 423-amino-acid chain; its full sequence is Polyglutamylase complex subunit TTLL1 (423 aa).

The TTL domain occupies 1–367 (MAGRVKWVTD…NGEIPDCKWN (367 aa)). Residues K138, 144–145 (QG), 181–184 (SVYI), and 194–196 (KFD) contribute to the ATP site. Q144 is an a protein binding site. R220 provides a ligand contact to L-glutamate. ATP is bound at residue 241–242 (TN). K259 contributes to the L-glutamate binding site. Mg(2+) is bound by residues D313, E326, and N328. Position 344 (K344) interacts with L-glutamate. A disordered region spans residues 390-423 (DGAERELRNRPGQPVGPRAGRSRDSGRSVLTTWK).

This sequence belongs to the tubulin polyglutamylase family. Part of the neuronal tubulin polyglutamylase complex which contains TPGS1, TPGS2, TTLL1, LRRC49 and NICN1. Interacts with PCM1, CSTPP1 and LRRC49. It depends on Mg(2+) as a cofactor. As to expression, highly expressed in brain, heart and kidney. Expressed in liver, lung, muscle, spleen, testis and trachea. In the brain, expressed in ependymal cilia, cortex, corpus callosum and striatum. Expressed in blastomere.

Its subcellular location is the cytoplasm. The protein resides in the cytoskeleton. The protein localises to the cilium basal body. It localises to the cilium axoneme. It is found in the cell projection. Its subcellular location is the cilium. The protein resides in the flagellum. It catalyses the reaction (L-glutamyl)(n)-gamma-L-glutamyl-L-glutamyl-[protein] + L-glutamate + ATP = (L-glutamyl)(n+1)-gamma-L-glutamyl-L-glutamyl-[protein] + ADP + phosphate + H(+). In terms of biological role, catalytic subunit of a polyglutamylase complex which modifies tubulin, generating side chains of glutamate on the gamma-carboxyl group of specific glutamate residues within the C-terminal tail of tubulin. Probably involved in the side-chain elongation step of the polyglutamylation reaction rather than the initiation step. Modifies both alpha- and beta-tubulins with a preference for the alpha-tail. Unlike most polyglutamylases of the tubulin--tyrosine ligase family, only displays a catalytic activity when in complex with other proteins as it is most likely lacking domains important for autonomous activity. Part of the neuronal tubulin polyglutamylase complex. Mediates cilia and flagella polyglutamylation which is essential for their biogenesis and motility. Involved in respiratory motile cilia function through the regulation of beating asymmetry. Essential for sperm flagella biogenesis, motility and male fertility. Also mediates glutamylation of non-tubulin proteins. Involved in KLF4 glutamylation which impedes its ubiquitination, thereby leading to somatic cell reprogramming, pluripotency maintenance and embryogenesis. The polypeptide is Polyglutamylase complex subunit TTLL1 (Mus musculus (Mouse)).